Here is a 1029-residue protein sequence, read N- to C-terminus: Eukaryotic translation initiation factor 3 subunit A (1029 aa).

Positions 92–121 form a coiled coil; sequence LKKFIELAEQKVTEAQAKADEIQSSLESAA. The region spanning 339-523 is the PCI domain; it reads MTKAASFVLL…GVLTFESDIF (185 aa). Positions 606–903 form a coiled coil; sequence TRRAIIEKRK…EEEAEQRRAA (298 aa). 4 stretches are compositionally biased toward basic and acidic residues: residues 621-632, 644-666, 797-901, and 913-924; these read ALQKKQREEENR, EQQR…EQDR, TEKR…EQRR, and GPAREASPERTA. Disordered regions lie at residues 621 to 666 and 797 to 1029; these read ALQK…EQDR and TEKR…KQQQ. Residues 943–960 show a composition bias toward low complexity; sequence AKAAASAGEQPAAAQEAT. Over residues 977-993 the composition is skewed to basic and acidic residues; that stretch reads ATRDGPSDSRDLSHARE.

Belongs to the eIF-3 subunit A family. In terms of assembly, component of the eukaryotic translation initiation factor 3 (eIF-3) complex.

It is found in the cytoplasm. In terms of biological role, RNA-binding component of the eukaryotic translation initiation factor 3 (eIF-3) complex, which is involved in protein synthesis of a specialized repertoire of mRNAs and, together with other initiation factors, stimulates binding of mRNA and methionyl-tRNAi to the 40S ribosome. The eIF-3 complex specifically targets and initiates translation of a subset of mRNAs involved in cell proliferation. This chain is Eukaryotic translation initiation factor 3 subunit A, found in Coccidioides immitis (strain RS) (Valley fever fungus).